The primary structure comprises 119 residues: Protein phosphatase EYA4 (119 aa).

This sequence belongs to the HAD-like hydrolase superfamily. EYA family. Mg(2+) is required as a cofactor.

The protein resides in the cytoplasm. Its subcellular location is the nucleus. It catalyses the reaction O-phospho-L-tyrosyl-[protein] + H2O = L-tyrosyl-[protein] + phosphate. Its function is as follows. Tyrosine phosphatase that specifically dephosphorylates 'Tyr-142' of histone H2AX (H2AXY142ph). 'Tyr-142' phosphorylation of histone H2AX plays a central role in DNA repair and acts as a mark that distinguishes between apoptotic and repair responses to genotoxic stress. Promotes efficient DNA repair by dephosphorylating H2AX, promoting the recruitment of DNA repair complexes containing MDC1. Its function as histone phosphatase probably explains its role in transcription regulation during organogenesis. May be involved in development of the eye. The sequence is that of Protein phosphatase EYA4 (eya4) from Takifugu rubripes (Japanese pufferfish).